Reading from the N-terminus, the 462-residue chain is UDP-N-acetylmuramoylalanine--D-glutamate ligase (462 aa).

111 to 117 is an ATP binding site; it reads GTNGKTT.

The protein belongs to the MurCDEF family.

It is found in the cytoplasm. The enzyme catalyses UDP-N-acetyl-alpha-D-muramoyl-L-alanine + D-glutamate + ATP = UDP-N-acetyl-alpha-D-muramoyl-L-alanyl-D-glutamate + ADP + phosphate + H(+). Its pathway is cell wall biogenesis; peptidoglycan biosynthesis. Functionally, cell wall formation. Catalyzes the addition of glutamate to the nucleotide precursor UDP-N-acetylmuramoyl-L-alanine (UMA). This chain is UDP-N-acetylmuramoylalanine--D-glutamate ligase, found in Trichodesmium erythraeum (strain IMS101).